A 361-amino-acid chain; its full sequence is P2Y purinoceptor 4 (361 aa).

Topologically, residues Met1–Lys30 are extracellular. Residues Phe31 to Phe58 form a helical membrane-spanning segment. Over Arg59 to Thr68 the chain is Cytoplasmic. The helical transmembrane segment at Tyr69–Tyr91 threads the bilayer. Residues Ala92–Arg108 are Extracellular-facing. Cys104 and Cys181 are oxidised to a cystine. The chain crosses the membrane as a helical span at residues Phe109 to Val127. At His128–Gly149 the chain is on the cytoplasmic side. The helical transmembrane segment at Leu150 to Val170 threads the bilayer. The Extracellular portion of the chain corresponds to Thr171–His192. Asn175 carries an N-linked (GlcNAc...) asparagine glycan. A helical transmembrane segment spans residues Tyr193 to Leu218. At Met219 to Thr242 the chain is on the cytoplasmic side. The chain crosses the membrane as a helical span at residues Ile243–Tyr265. Residues Leu266–Val283 are Extracellular-facing. The chain crosses the membrane as a helical span at residues Tyr284–Thr305. At Gly306 to Leu361 the chain is on the cytoplasmic side.

Belongs to the G-protein coupled receptor 1 family. Phosphorylation of Ser-329 and Ser-330 is a key step in agonist-dependent desensitization and loss of surface P2RY4. This phosphorylation does not involve PKC, nor other calcium-activated kinases. As to expression, expressed in the liver, intestine, stomach, bladder and lung.

The protein resides in the cell membrane. In terms of biological role, receptor for ATP and UTP coupled to G-proteins that activate a phosphatidylinositol-calcium second messenger system. The sequence is that of P2Y purinoceptor 4 (P2ry4) from Mus musculus (Mouse).